The primary structure comprises 357 residues: Sulfate/thiosulfate import ATP-binding protein CysA (357 aa).

One can recognise an ABC transporter domain in the interval isoleucine 3–leucine 237. Glycine 35–threonine 42 provides a ligand contact to ATP.

It belongs to the ABC transporter superfamily. Sulfate/tungstate importer (TC 3.A.1.6) family. The complex is composed of two ATP-binding proteins (CysA), two transmembrane proteins (CysT and CysW) and a solute-binding protein (CysP).

Its subcellular location is the cell inner membrane. The catalysed reaction is sulfate(out) + ATP + H2O = sulfate(in) + ADP + phosphate + H(+). The enzyme catalyses thiosulfate(out) + ATP + H2O = thiosulfate(in) + ADP + phosphate + H(+). Part of the ABC transporter complex CysAWTP involved in sulfate/thiosulfate import. Responsible for energy coupling to the transport system. This is Sulfate/thiosulfate import ATP-binding protein CysA from Neisseria meningitidis serogroup B (strain ATCC BAA-335 / MC58).